A 937-amino-acid chain; its full sequence is C-1-tetrahydrofolate synthase, cytoplasmic (937 aa).

Residues 1–309 (MALLLEGTSL…TLLPLKLQTP (309 aa)) are methylenetetrahydrofolate dehydrogenase and cyclohydrolase. Residues 50–54 (YVRMK) and 97–99 (VQL) contribute to the substrate site. Residues 168–170 (GRS) and S193 each bind NADP(+). 268–272 (PGSVG) contributes to the substrate binding site. Residues 310 to 937 (VPSDIEIARS…AENGDIVGLS (628 aa)) are formyltetrahydrofolate synthetase. 374–381 (TPFGEGKS) lines the ATP pocket.

In the N-terminal section; belongs to the tetrahydrofolate dehydrogenase/cyclohydrolase family. This sequence in the C-terminal section; belongs to the formate--tetrahydrofolate ligase family. As to quaternary structure, homodimer.

It is found in the cytoplasm. The enzyme catalyses (6R)-5,10-methylene-5,6,7,8-tetrahydrofolate + NADP(+) = (6R)-5,10-methenyltetrahydrofolate + NADPH. It catalyses the reaction (6R)-5,10-methenyltetrahydrofolate + H2O = (6R)-10-formyltetrahydrofolate + H(+). The catalysed reaction is (6S)-5,6,7,8-tetrahydrofolate + formate + ATP = (6R)-10-formyltetrahydrofolate + ADP + phosphate. The protein operates within one-carbon metabolism; tetrahydrofolate interconversion. The protein is C-1-tetrahydrofolate synthase, cytoplasmic of Schizosaccharomyces pombe (strain 972 / ATCC 24843) (Fission yeast).